A 494-amino-acid chain; its full sequence is 3-octaprenyl-4-hydroxybenzoate carboxy-lyase (494 aa).

Residue Asn172 participates in Mn(2+) binding. Prenylated FMN contacts are provided by residues 175–177 (IYR), 189–191 (RWL), and 194–195 (RG). Glu238 is a binding site for Mn(2+). Residue Asp287 is the Proton donor of the active site.

The protein belongs to the UbiD family. Homohexamer. Requires prenylated FMN as cofactor. The cofactor is Mn(2+).

It is found in the cell membrane. It catalyses the reaction a 4-hydroxy-3-(all-trans-polyprenyl)benzoate + H(+) = a 2-(all-trans-polyprenyl)phenol + CO2. It functions in the pathway cofactor biosynthesis; ubiquinone biosynthesis. Catalyzes the decarboxylation of 3-octaprenyl-4-hydroxy benzoate to 2-octaprenylphenol, an intermediate step in ubiquinone biosynthesis. This Erwinia tasmaniensis (strain DSM 17950 / CFBP 7177 / CIP 109463 / NCPPB 4357 / Et1/99) protein is 3-octaprenyl-4-hydroxybenzoate carboxy-lyase.